Consider the following 422-residue polypeptide: Probable biofilm formation methyltransferase WspC (422 aa).

A CheR-type methyltransferase domain is found at 1–264; that stretch reads MNDRFERLLK…LSFVFRRTSE (264 aa). S-adenosyl-L-methionine-binding positions include T67, R71, E108, D132, 186 to 187, and 205 to 206; these read NL and RN. Positions 289 to 316 are disordered; it reads ASIRPSPPPPAKPRQRLSSLVPPASGQP. The stretch at 354–387 is one TPR repeat; sequence ATVFYWLGLLSDVAGQEQEAQDFYRKALYLEPQH.

In terms of assembly, monomer.

Functionally, involved in biofilm formation. In Pseudomonas aeruginosa (strain ATCC 15692 / DSM 22644 / CIP 104116 / JCM 14847 / LMG 12228 / 1C / PRS 101 / PAO1), this protein is Probable biofilm formation methyltransferase WspC (wspC).